The chain runs to 235 residues: Probable deoxycytidine kinase FPV151 (235 aa).

ATP is bound at residue G30–T38. 3 residues coordinate substrate: E53, Y68, and Q79. Catalysis depends on E104, which acts as the Proton acceptor. Substrate is bound by residues R105, D110, and E172.

It belongs to the DCK/DGK family.

It carries out the reaction 2'-deoxycytidine + a ribonucleoside 5'-triphosphate = dCMP + a ribonucleoside 5'-diphosphate + H(+). This is Probable deoxycytidine kinase FPV151 from Vertebrata (FPV).